We begin with the raw amino-acid sequence, 57 residues long: Small nuclear protein PRAC1 (57 aa).

Positions 38–57 (RSDGSACNSGISGGRGRKIP) are disordered.

As to expression, highly expressed in prostate, rectum, and distal colon, and weakly expressed in bladder. Expressed in prostate cancer cell lines.

The protein resides in the nucleus. This is Small nuclear protein PRAC1 (PRAC1) from Homo sapiens (Human).